Consider the following 65-residue polypeptide: LTCLNCPEVYCRRFQICRDGEKICFKKFDQRNLLGKRYRRGCAATCPEAKPREIVQCCSTDKCNR.

5 disulfides stabilise this stretch: Cys-3-Cys-24, Cys-6-Cys-11, Cys-17-Cys-42, Cys-46-Cys-57, and Cys-58-Cys-63.

This sequence belongs to the three-finger toxin family. Ancestral subfamily. Orphan group II sub-subfamily. As to expression, expressed by the venom gland.

It localises to the secreted. Functionally, binds with low affinity to muscular (alpha-1-beta-1-delta-epsilon/CHRNA1-CHRNB1-CHRND-CHRNE) and very low affinity to neuronal (alpha-7/CHRNA7) nicotinic acetylcholine receptor (nAChR). In Naja naja (Indian cobra), this protein is Weak neurotoxin 7.